Reading from the N-terminus, the 228-residue chain is Max-interacting protein 1 (228 aa).

Disordered stretches follow at residues 29–76 and 161–228; these read GYAS…NELE and IGST…SFTS. Positions 43-56 are enriched in basic residues; that stretch reads QHSKPPRRLSRAQK. Positions 57 to 70 are enriched in polar residues; the sequence is HSSGSSNTSTANRS. In terms of domain architecture, bHLH spans 67–119; the sequence is ANRSTHNELEKNRRAHLRLCLERLKVLIPLGPDCTRHTTLGLLNKAKAHIKKL. Acidic residues predominate over residues 173–183; it reads EREEIEVDVES. Positions 216 to 228 are enriched in polar residues; sequence GYSSASVKLSFTS.

As to quaternary structure, interacts with SMC3. Efficient DNA binding requires dimerization with another bHLH protein. Binds DNA as a heterodimer with MAX. Interacts with RNF17. High levels found in the brain, heart and lung while lower levels are seen in the liver, kidney and skeletal muscle.

It is found in the nucleus. Transcriptional repressor. MXI1 binds with MAX to form a sequence-specific DNA-binding protein complex which recognizes the core sequence 5'-CAC[GA]TG-3'. MXI1 thus antagonizes MYC transcriptional activity by competing for MAX. In Homo sapiens (Human), this protein is Max-interacting protein 1 (MXI1).